Reading from the N-terminus, the 312-residue chain is Pseudouridine-5'-phosphate glycosidase 2 (312 aa).

Glu-31 acts as the Proton donor in catalysis. Substrate-binding residues include Lys-93 and Val-113. Mn(2+) is bound at residue Asp-145. 147–149 is a substrate binding site; sequence SAD. The Nucleophile role is filled by Lys-166.

It belongs to the pseudouridine-5'-phosphate glycosidase family. As to quaternary structure, homotrimer. It depends on Mn(2+) as a cofactor.

The catalysed reaction is D-ribose 5-phosphate + uracil = psi-UMP + H2O. Functionally, catalyzes the reversible cleavage of pseudouridine 5'-phosphate (PsiMP) to ribose 5-phosphate and uracil. Functions biologically in the cleavage direction, as part of a pseudouridine degradation pathway. The polypeptide is Pseudouridine-5'-phosphate glycosidase 2 (Photorhabdus laumondii subsp. laumondii (strain DSM 15139 / CIP 105565 / TT01) (Photorhabdus luminescens subsp. laumondii)).